The sequence spans 182 residues: Orotate phosphoribosyltransferase (182 aa).

5-phospho-alpha-D-ribose 1-diphosphate-binding positions include Arg96, Lys97, Lys100, His102, and 122–130 (EDTSTTGGS). Thr126 and Arg154 together coordinate orotate.

It belongs to the purine/pyrimidine phosphoribosyltransferase family. PyrE subfamily. Homodimer. It depends on Mg(2+) as a cofactor.

The catalysed reaction is orotidine 5'-phosphate + diphosphate = orotate + 5-phospho-alpha-D-ribose 1-diphosphate. It participates in pyrimidine metabolism; UMP biosynthesis via de novo pathway; UMP from orotate: step 1/2. Catalyzes the transfer of a ribosyl phosphate group from 5-phosphoribose 1-diphosphate to orotate, leading to the formation of orotidine monophosphate (OMP). This chain is Orotate phosphoribosyltransferase, found in Streptomyces coelicolor (strain ATCC BAA-471 / A3(2) / M145).